Consider the following 195-residue polypeptide: Cysteine/O-acetylserine efflux protein (195 aa).

Over 1 to 7 (MTPTLLS) the chain is Periplasmic. Residues 8–28 (AFWTYTLITAMTPGPNNILAL) form a helical membrane-spanning segment. Over 29 to 46 (SSATTHGFHQSTRVLAGM) the chain is Cytoplasmic. The chain crosses the membrane as a helical span at residues 47–67 (SLGFLIVMLLCAGISFSLAVI). The Periplasmic segment spans residues 68–69 (DP). A helical membrane pass occupies residues 70–90 (AAVHLLSWAGAAYIVWLAWKI). Residues 91–104 (ATSPTKEDGLQTKP) lie on the Cytoplasmic side of the membrane. The chain crosses the membrane as a helical span at residues 105-125 (ISFWASFALQFVNVKIILYGV). At 126 to 141 (TALSTFVLPQTQALSW) the chain is on the periplasmic side. Residues 142-162 (IVGVSVLLAMIGTFGNVCWAL) traverse the membrane as a helical segment. The Cytoplasmic portion of the chain corresponds to 163 to 176 (AGHLFQRLFRQYGR). The helical transmembrane segment at 177–194 (QLNIVLALLLIYCAVRIF) threads the bilayer. Position 195 (Y195) is a topological domain, periplasmic.

The protein belongs to the Rht family.

The protein localises to the cell inner membrane. It carries out the reaction O-acetyl-L-serine(in) = O-acetyl-L-serine(out). It catalyses the reaction L-cysteine(in) = L-cysteine(out). Functionally, exporter of O-acetylserine (OAS) and cysteine. This is Cysteine/O-acetylserine efflux protein (eamB) from Escherichia coli O157:H7.